Reading from the N-terminus, the 113-residue chain is MNTVRVTFLLVFVLAVSLGQADKDENRMEMQEKTEQGKSYLDFAENLLLQKLEELEAKLLEEDSEESRNSRQKRCIGEGVPCDENDPRCCSGLVCLKPTLHGIRYKSYYCYKK.

A signal peptide spans 1–21 (MNTVRVTFLLVFVLAVSLGQA). Positions 22 to 74 (DKDENRMEMQEKTEQGKSYLDFAENLLLQKLEELEAKLLEEDSEESRNSRQKR) are excised as a propeptide. Residues 60-69 (LEEDSEESRN) are compositionally biased toward basic and acidic residues. The interval 60–83 (LEEDSEESRNSRQKRCIGEGVPCD) is disordered. Disulfide bonds link Cys-75–Cys-90, Cys-82–Cys-95, and Cys-89–Cys-110.

This sequence belongs to the neurotoxin 14 (magi-1) family. 01 (HNTX-16) subfamily. As to expression, expressed by the venom gland.

The protein resides in the secreted. Probable ion channel inhibitor. This Cyriopagopus hainanus (Chinese bird spider) protein is U11-theraphotoxin-Hhn1t.